Consider the following 190-residue polypeptide: Holliday junction branch migration complex subunit RuvA (190 aa).

The domain I stretch occupies residues 1-64 (MIGKLTGTLL…EDAQLLYGFG (64 aa)). The interval 65–137 (TAQERQAFRE…LKGKLGADVG (73 aa)) is domain II. Positions 137–141 (GVRAH) are flexible linker. The domain III stretch occupies residues 142–190 (AANDNQADILQALLALGYNDKEAAAALKALPADVGVSEGIKLALKSLSK).

Belongs to the RuvA family. In terms of assembly, homotetramer. Forms an RuvA(8)-RuvB(12)-Holliday junction (HJ) complex. HJ DNA is sandwiched between 2 RuvA tetramers; dsDNA enters through RuvA and exits via RuvB. An RuvB hexamer assembles on each DNA strand where it exits the tetramer. Each RuvB hexamer is contacted by two RuvA subunits (via domain III) on 2 adjacent RuvB subunits; this complex drives branch migration. In the full resolvosome a probable DNA-RuvA(4)-RuvB(12)-RuvC(2) complex forms which resolves the HJ.

The protein resides in the cytoplasm. Its function is as follows. The RuvA-RuvB-RuvC complex processes Holliday junction (HJ) DNA during genetic recombination and DNA repair, while the RuvA-RuvB complex plays an important role in the rescue of blocked DNA replication forks via replication fork reversal (RFR). RuvA specifically binds to HJ cruciform DNA, conferring on it an open structure. The RuvB hexamer acts as an ATP-dependent pump, pulling dsDNA into and through the RuvAB complex. HJ branch migration allows RuvC to scan DNA until it finds its consensus sequence, where it cleaves and resolves the cruciform DNA. The sequence is that of Holliday junction branch migration complex subunit RuvA from Acidovorax sp. (strain JS42).